The primary structure comprises 1412 residues: Ecdysone-induced protein 75B, isoform B (1412 aa).

Over residues methionine 1–glycine 14 the composition is skewed to low complexity. Disordered regions lie at residues methionine 1–threonine 96, glutamine 110–valine 204, glutamine 258–proline 298, and histidine 321–aspartate 448. Over residues glycine 15–serine 25 the composition is skewed to gly residues. Residues isoleucine 32–proline 57 are compositionally biased toward basic and acidic residues. A compositionally biased stretch (low complexity) spans serine 58–serine 68. The segment covering leucine 69–threonine 81 has biased composition (polar residues). Positions proline 87 to threonine 96 are enriched in low complexity. Residues tyrosine 124–serine 133 are compositionally biased toward polar residues. Over residues serine 135–threonine 150 the composition is skewed to low complexity. Polar residues predominate over residues proline 151–histidine 164. A compositionally biased stretch (low complexity) spans histidine 177–histidine 203. Over residues proline 266–glutamine 284 the composition is skewed to pro residues. 3 stretches are compositionally biased toward low complexity: residues glutamine 323 to isoleucine 371, serine 378 to methionine 403, and alanine 417 to proline 447. A DNA-binding region (nuclear receptor) is located at residues threonine 455–phenylalanine 531. 2 consecutive NR C4-type zinc fingers follow at residues cysteine 458–cysteine 478 and cysteine 495–cysteine 514. Positions aspartate 565–asparagine 813 constitute an NR LBD domain. 6 disordered regions span residues lysine 837 to alanine 878, leucine 984 to aspartate 1021, valine 1044 to isoleucine 1064, alanine 1108 to serine 1174, glutamate 1204 to alanine 1317, and valine 1368 to leucine 1401. Composition is skewed to low complexity over residues glycine 854–leucine 866, serine 1005–serine 1017, valine 1044–serine 1058, alanine 1110–glutamine 1155, and serine 1163–serine 1174. Polar residues-rich tracts occupy residues serine 1206 to arginine 1219 and alanine 1231 to glutamine 1253. 3 stretches are compositionally biased toward low complexity: residues serine 1254–serine 1290, serine 1299–alanine 1317, and alanine 1372–glycine 1400.

The protein belongs to the nuclear hormone receptor family. NR1 subfamily.

It localises to the nucleus. In terms of biological role, implicated in the regulation of ecdysone-triggered gene hierarchies. Probably plays a key role in mediating the regulation of the larval molt by 20-OH-ecdysone. This is Ecdysone-induced protein 75B, isoform B (Eip75B) from Drosophila melanogaster (Fruit fly).